Consider the following 282-residue polypeptide: Glycine betaine/carnitine transport permease protein GbuB (282 aa).

6 helical membrane-spanning segments follow: residues 44-64, 70-90, 99-119, 140-160, 220-240, and 251-271; these read VFDL…TFWV, KWGL…LDFW, LVLT…IWMA, AFVY…PGVV, IMLA…GLGT, and AGGG…LDRL. The region spanning 93 to 272 is the ABC transmembrane type-1 domain; sequence MTQTLTLVLT…IVAIILDRLT (180 aa).

Belongs to the binding-protein-dependent transport system permease family. The complex is composed of two ATP-binding proteins (GbuA), two transmembrane proteins (GbuB) and a solute-binding protein (GbuC).

It localises to the cell membrane. The complex is activated by an osmotic gradient or by low temperature. Functionally, part of the ABC transporter complex GbuABC involved in glycine betaine uptake. Responsible for the translocation of the substrate across the membrane. Involved, with BetL and OpuC, in osmoprotection and cryoprotection of Listeria. Can also uptake carnitine when carnitine is abundant in the growth medium. This chain is Glycine betaine/carnitine transport permease protein GbuB (gbuB), found in Listeria monocytogenes serotype 1/2a (strain 10403S).